Consider the following 388-residue polypeptide: Probable peptidoglycan glycosyltransferase FtsW (388 aa).

Residues 1 to 19 (MSAAAPKPRPAHRFHIDQT) are Cytoplasmic-facing. Residues 20 to 40 (LLSVCLCLLGIGFVMVASSSM) traverse the membrane as a helical segment. Over 41–57 (HLGVKMADDVSYYPFKQ) the chain is Periplasmic. Residues 58–78 (LVHIILGLMFAAAILAIPMKY) form a helical membrane-spanning segment. Residues 79 to 85 (WQKIGQP) lie on the Cytoplasmic side of the membrane. Residues 86–106 (LFIVGLVLLLVVLIPGVGVKV) form a helical membrane-spanning segment. At 107–117 (NGSTRWLSLLG) the chain is on the periplasmic side. The helical transmembrane segment at 118–137 (LRIQVSEVMKFISVVYMAGY) threads the bilayer. The Cytoplasmic portion of the chain corresponds to 138 to 147 (ITRHSDHVRH). Residues 148 to 168 (SIFGLLRPLMLLSVASILLLL) form a helical membrane-spanning segment. Residues 169 to 170 (EP) lie on the Periplasmic side of the membrane. A helical transmembrane segment spans residues 171-191 (DFGSAVVILIIAMGMMFLGGA). A topological domain (cytoplasmic) is located at residue Arg-192. A helical membrane pass occupies residues 193–213 (LSPFVALVALISSAGAILASS). The Periplasmic portion of the chain corresponds to 214–271 (ADYRVKRMTSFLNPWEHARDSGYQLTQALISFGRGEVSGVGLGNGLQKLFYLPEAHTD). Residues 272-292 (FLFSVLGEELGLVGVTLVIAL) traverse the membrane as a helical segment. Over 293–315 (FTTLVVRGFSIGEQAEAAGERFS) the chain is Cytoplasmic. Residues 316 to 336 (ALVAYGLVIWFGFQAFVNMGV) form a helical membrane-spanning segment. Residues 337–348 (NMGILPTKGLTL) lie on the Periplasmic side of the membrane. Residues 349-369 (PLMSYGGGSMIVMCGAMAVLF) form a helical membrane-spanning segment. Residues 370 to 388 (RIHYEVTELHKSNIKGKSR) are Cytoplasmic-facing.

This sequence belongs to the SEDS family. FtsW subfamily.

Its subcellular location is the cell inner membrane. It carries out the reaction [GlcNAc-(1-&gt;4)-Mur2Ac(oyl-L-Ala-gamma-D-Glu-L-Lys-D-Ala-D-Ala)](n)-di-trans,octa-cis-undecaprenyl diphosphate + beta-D-GlcNAc-(1-&gt;4)-Mur2Ac(oyl-L-Ala-gamma-D-Glu-L-Lys-D-Ala-D-Ala)-di-trans,octa-cis-undecaprenyl diphosphate = [GlcNAc-(1-&gt;4)-Mur2Ac(oyl-L-Ala-gamma-D-Glu-L-Lys-D-Ala-D-Ala)](n+1)-di-trans,octa-cis-undecaprenyl diphosphate + di-trans,octa-cis-undecaprenyl diphosphate + H(+). It functions in the pathway cell wall biogenesis; peptidoglycan biosynthesis. Peptidoglycan polymerase that is essential for cell division. This is Probable peptidoglycan glycosyltransferase FtsW from Methylomonas methanica (strain DSM 25384 / MC09).